Here is a 56-residue protein sequence, read N- to C-terminus: Conotoxin Cal6.41c (56 aa).

The N-terminal stretch at 1–23 is a signal peptide; sequence MSGSGAMLLGLLILVAMATSLDT. 3 disulfide bridges follow: cysteine 27–cysteine 41, cysteine 33–cysteine 50, and cysteine 40–cysteine 54.

As to expression, expressed by the venom duct.

It localises to the secreted. Its function is as follows. Probable neurotoxin. The chain is Conotoxin Cal6.41c from Californiconus californicus (California cone).